A 434-amino-acid polypeptide reads, in one-letter code: MSQTHLSTKKFADFPLKPEILAALNENGFEFCTPIQALSLPILLNAKDIAGQAQTGTGKTMAFLVATFNHLLNVAAPESRKATEPRAIIMAPTRELAIQIAKDAKLLAAHTGLKVGIVYGGESYETQRAVLDKGVDILIGTTGRIIDYVRQGVISLSHIQAVVLDEADRMFDLGFIKDIRFLFRRMPDAKSRLNMLFSATLSMKVQELAYDHMNDPEKVEIEPLEKTSKNIKEEIFYPSMEDKMRLLLSLIEEDWPDKAIVFSNTKHSCEKLWSYLEGDGHRVGLLTGDVPQKKRIRILEQFTSGEIDVLVATDVAARGLHISDVSHVYNYDLPDDCEDYVHRIGRTGRAGQKGISISFACEEYALNLPEIETYINHSIPVSNYDKDALLDDIPPPARIHRKPPTSRTRDGGSKGAHRSGGNTSRPPRHRTRRP.

The short motif at 9–37 is the Q motif element; that stretch reads KKFADFPLKPEILAALNENGFEFCTPIQA. The region spanning 40-219 is the Helicase ATP-binding domain; that stretch reads LPILLNAKDI…YDHMNDPEKV (180 aa). 53 to 60 is an ATP binding site; that stretch reads AQTGTGKT. Residues 165 to 168 carry the DEAD box motif; that stretch reads DEAD. Positions 243-390 constitute a Helicase C-terminal domain; that stretch reads KMRLLLSLIE…VSNYDKDALL (148 aa). The disordered stretch occupies residues 390-434; the sequence is LDDIPPPARIHRKPPTSRTRDGGSKGAHRSGGNTSRPPRHRTRRP.

It belongs to the DEAD box helicase family. RhlB subfamily. As to quaternary structure, component of the RNA degradosome, which is a multiprotein complex involved in RNA processing and mRNA degradation.

It localises to the cytoplasm. The enzyme catalyses ATP + H2O = ADP + phosphate + H(+). In terms of biological role, DEAD-box RNA helicase involved in RNA degradation. Has RNA-dependent ATPase activity and unwinds double-stranded RNA. The protein is ATP-dependent RNA helicase RhlB of Shewanella frigidimarina (strain NCIMB 400).